Reading from the N-terminus, the 183-residue chain is Ribosome-recycling factor (183 aa).

This sequence belongs to the RRF family.

The protein localises to the cytoplasm. Its function is as follows. Responsible for the release of ribosomes from messenger RNA at the termination of protein biosynthesis. May increase the efficiency of translation by recycling ribosomes from one round of translation to another. This chain is Ribosome-recycling factor, found in Mycoplasma mobile (strain ATCC 43663 / 163K / NCTC 11711) (Mesomycoplasma mobile).